A 123-amino-acid chain; its full sequence is Large ribosomal subunit protein uL29 (123 aa).

Lys19 bears the N6-acetyllysine mark. Lys25 is covalently cross-linked (Glycyl lysine isopeptide (Lys-Gly) (interchain with G-Cter in SUMO2)). Phosphoserine is present on Ser29. Position 43 is an N6-acetyllysine (Lys43). Positions 95–114 (LNKHEENLKTKKQQRKERLY) are disordered.

The protein belongs to the universal ribosomal protein uL29 family. In terms of assembly, component of the large ribosomal subunit.

Its subcellular location is the cytoplasm. Functionally, component of the large ribosomal subunit. The ribosome is a large ribonucleoprotein complex responsible for the synthesis of proteins in the cell. In Bos taurus (Bovine), this protein is Large ribosomal subunit protein uL29 (RPL35).